We begin with the raw amino-acid sequence, 29 residues long: HEPCGESCVFIPCITTVVGCSCKNKVCYD.

The segment at residues 1-29 is a cross-link (cyclopeptide (His-Asp)); sequence HEPCGESCVFIPCITTVVGCSCKNKVCYD. Disulfide bonds link cysteine 4–cysteine 20, cysteine 8–cysteine 22, and cysteine 13–cysteine 27.

In terms of processing, contains 3 disulfide bonds. This is a cyclic peptide.

Probably participates in a plant defense mechanism. This is Cyclotide cter-L from Clitoria ternatea (Butterfly pea).